The chain runs to 473 residues: MKTLYSRRRFYHVETLFNGTLALAGRDQETTGFAWWAGNARLINLSGKLLGAHVAHAGLIVFWAGAMNLFEVAHFVPEKPMYEQGLILLPHLATLGWGVGPGGEVIDTFPYFVSGVLHLISSAVLGFGGIYHALLGPETLEESFPFFGYVWKDRNKMTTILGIHLILLGIGAFLLVFKALYFGGVYDTWAPGGGDVRKITNLTLSPSIIFGYLLKSPFGGEGWIVSVDDLEDIIGGHVWLGSICILGGIWHILTKPFAWARRALVWSGEAYLSYSLGALAVFGFIACCFVWFNNTAYPSEFYGPTGPEASQAQAFTFLVRDQRLGANVGSAQGPTGLGKYLMRSPTGEVIFGGETMRFWDLRAPWLEPLRGPNGLDLSRLKKDIQPWQERRSAEYMTHAPLGSLNSVGGVATEINAVNYVSPRSWLATSHFVLGFFFFVGHLWHAGRARAAAAGFEKGIDRDFEPVLSMTPLN.

Residues 1-14 (MKTLYSRRRFYHVE) constitute a propeptide that is removed on maturation. At Thr-15 the chain carries N-acetylthreonine. Thr-15 is modified (phosphothreonine). 5 helical membrane-spanning segments follow: residues 69–93 (LFEV…PHLA), 134–155 (LLGP…KDRN), 178–200 (KALY…RKIT), 255–275 (KPFA…LSYS), and 291–312 (WFNN…ASQA). Glu-367 contributes to the [CaMn4O5] cluster binding site. The helical transmembrane segment at 447 to 471 (RARAAAAGFEKGIDRDFEPVLSMTP) threads the bilayer.

It belongs to the PsbB/PsbC family. PsbC subfamily. As to quaternary structure, PSII is composed of 1 copy each of membrane proteins PsbA, PsbB, PsbC, PsbD, PsbE, PsbF, PsbH, PsbI, PsbJ, PsbK, PsbL, PsbM, PsbT, PsbX, PsbY, PsbZ, Psb30/Ycf12, at least 3 peripheral proteins of the oxygen-evolving complex and a large number of cofactors. It forms dimeric complexes. The cofactor is Binds multiple chlorophylls and provides some of the ligands for the Ca-4Mn-5O cluster of the oxygen-evolving complex. It may also provide a ligand for a Cl- that is required for oxygen evolution. PSII binds additional chlorophylls, carotenoids and specific lipids..

The protein localises to the plastid. The protein resides in the chloroplast thylakoid membrane. Functionally, one of the components of the core complex of photosystem II (PSII). It binds chlorophyll and helps catalyze the primary light-induced photochemical processes of PSII. PSII is a light-driven water:plastoquinone oxidoreductase, using light energy to abstract electrons from H(2)O, generating O(2) and a proton gradient subsequently used for ATP formation. In Solanum bulbocastanum (Wild potato), this protein is Photosystem II CP43 reaction center protein.